The sequence spans 210 residues: RNA chaperone ProQ (210 aa).

Basic and acidic residues-rich tracts occupy residues Leu-103 to Lys-124 and Arg-132 to Lys-144. Positions Leu-103–Lys-148 are disordered.

Belongs to the ProQ family.

It localises to the cytoplasm. Functionally, RNA chaperone with significant RNA binding, RNA strand exchange and RNA duplexing activities. This is RNA chaperone ProQ from Aeromonas salmonicida (strain A449).